Consider the following 593-residue polypeptide: Insulin-like growth factor 2 mRNA-binding protein 3-B (593 aa).

RRM domains follow at residues asparagine 2–proline 75 and arginine 81–aspartate 156. Residues alanine 159–arginine 208 are disordered. The segment covering proline 161 to proline 176 has biased composition (low complexity). KH domains follow at residues glutamate 204 to isoleucine 269 and glutamate 285 to valine 352. Low complexity predominate over residues serine 390–proline 402. A disordered region spans residues serine 390–glycine 412. KH domains are found at residues serine 417 to isoleucine 482 and lysine 499 to isoleucine 565. A disordered region spans residues glutamine 571–lysine 593.

The protein belongs to the RRM IMP/VICKZ family. In terms of assembly, homodimer and multimer. Associates with microtubules. Interaction with a translocation machinery protein TRAPA of the endoplasmic reticulum. Component of a mRNP complex, at least composed of DAZAP1, IGF2BP3, STAU and VgRBP60. The mRNP complex with DAZAP1, IGF2BP3, STAU and VgRBP60 is only found in the cytoplasm. Interacts with a hnRNP 1 related RNA transport protein VgRBP60 both in the nucleus (in an RNA-independent manner) and the cytoplasm (in an RNA-dependent manner). Found in a B3 activator complex. In terms of tissue distribution, expressed in oocytes, kidney and pancreas (at protein level). Expressed in oocytes, kidney and pancreas.

The protein localises to the nucleus. It localises to the cytoplasm. Its subcellular location is the endoplasmic reticulum. RNA-binding protein that acts as a regulator of mRNA transport and localization. Binds to the RNA sequence motif 5'-UUCAC-3'. Preferentially binds to N6-methyladenosine (m6A)-containing mRNAs and increases their stability. Mediates the specific association of Vg1 RNA to microtubules. May regulate mRNA translation. Binds specifically to the vegetal localization elements (VLE or VgLE) in the 3'-UTR of Vg1 and VegT mRNAs. Binds to the Vg1 and VegT mRNAs in both the nucleus and the cytoplasm. May regulate mRNA translation. Acts as a transcription regulator. Binds to the 5'-[TA]GGTTACT-3' motif within element 3 of the TFIIIA gene promoter. The sequence is that of Insulin-like growth factor 2 mRNA-binding protein 3-B (igf2bp3-b) from Xenopus laevis (African clawed frog).